The primary structure comprises 68 residues: Probable tautomerase HP_0924 (68 aa).

P2 acts as the Proton acceptor; via imino nitrogen in catalysis.

It belongs to the 4-oxalocrotonate tautomerase family.

The sequence is that of Probable tautomerase HP_0924 from Helicobacter pylori (strain ATCC 700392 / 26695) (Campylobacter pylori).